The primary structure comprises 183 residues: Translation initiation factor IF-3 (183 aa).

Residues Met-1–Lys-13 are compositionally biased toward polar residues. The interval Met-1–Arg-24 is disordered.

It belongs to the IF-3 family. As to quaternary structure, monomer.

Its subcellular location is the cytoplasm. Functionally, IF-3 binds to the 30S ribosomal subunit and shifts the equilibrium between 70S ribosomes and their 50S and 30S subunits in favor of the free subunits, thus enhancing the availability of 30S subunits on which protein synthesis initiation begins. The sequence is that of Translation initiation factor IF-3 from Acinetobacter baylyi (strain ATCC 33305 / BD413 / ADP1).